We begin with the raw amino-acid sequence, 859 residues long: MRASLENGDDHDAHRLVDAGFRPPGRPRAARRRAFARARRGERRARGTAEDRHDVPGAEQPVLRDDAKGARRGGRVDRRAGDRHRRASRREQAGERRRGHAAEEDRHPAREPDRFDGHPVGRRVGEEGGRRRRRGGRERERPGRRVRRLEEFRRGRDVVRLPREGDRRRRRSRDPRRHPGRADSRARARLPRGAREIPEREDRRRAERQAGARERARRHREHDPGAPVAQGRLQRQRRRLDGRAVRDRGVGPRHQAHERRRRAGGDRGDAEAELEVHRDVRAVPARPDSPRDRHRAREEVGRQCAEGDSGRREADRQGQREDVQLVSGPRDEADDMDEASGAARAPDEASEEAMDTILALTGITKRFPGVVALRGIDLRVARGEIHALLGENGAGKSTLMKILCGIHPPDEGVIALDGEPRRFANHHDAIAAGVGIVFQEFSLIPELNAVDNLFLGREWRGRLGLRERARMRRAAADIFARLDVAIDLSAPVRELSVAQQQFVEIGKALSLDARLLILDEPTATLTPAEAAHLFGVMRELKRRGVAMIFISHHLDEIFEVCDRITVLRDGQYVGTTEVARTDVGALVEMMVGRRIEQSFPPKPRLARDAAPVLEVDALQVRENGPVNRFALREGEILGFAGLVGSGRTSSALALIGAKPARVRRMRVRGRPVCLADPAAALAAGIGLLPESRKTQGLIPAFSIRHNIAINNLGKHRRLRWFVDAAAETRTTLELMQRLGVKAPTPHTRVDTLSGGNQQKVVIARWLNHHTRILIFDEPTRGIDIGAKAEIYQLMRELSARGYSIVLISSELPEIVGLCDRVAVFRQGRIEAMLEGEAIEPNTVMTYATSDVRGANHEHA.

The segment at 1–351 (MRASLENGDD…AARAPDEASE (351 aa)) is disordered. The interval 1–353 (MRASLENGDD…RAPDEASEEA (353 aa)) is unknown. The segment covering 8-17 (GDDHDAHRLV) has biased composition (basic and acidic residues). Basic residues predominate over residues 28–43 (RAARRRAFARARRGER). 3 stretches are compositionally biased toward basic and acidic residues: residues 44 to 80 (RARG…DRRA), 89 to 129 (RREQ…EEGG), and 137 to 167 (RERE…EGDR). Residues 168–179 (RRRRSRDPRRHP) are compositionally biased toward basic residues. 5 stretches are compositionally biased toward basic and acidic residues: residues 193–214 (GARE…GARE), 239–250 (RLDGRAVRDRGV), 263–281 (AGGD…RDVR), 288–301 (DSPR…EEVG), and 308–323 (DSGR…REDV). 2 consecutive ABC transporter domains span residues 358–594 (LALT…VGRR) and 607–851 (RDAA…TSDV). 390-397 (GENGAGKS) is an ATP binding site.

This sequence belongs to the ABC transporter superfamily. Ribose importer (TC 3.A.1.2.1) family. As to quaternary structure, the complex is composed of an ATP-binding protein (RbsA), two transmembrane proteins (RbsC) and a solute-binding protein (RbsB).

It is found in the cell inner membrane. It carries out the reaction D-ribose(out) + ATP + H2O = D-ribose(in) + ADP + phosphate + H(+). Part of the ABC transporter complex RbsABC involved in ribose import. Responsible for energy coupling to the transport system. In Burkholderia pseudomallei (strain 1710b), this protein is Ribose import ATP-binding protein RbsA 1.